The following is a 300-amino-acid chain: MTDFLDTDYTQRFIFDDSDTRGELVSLERSYAEVLAKHPYPEPVAQLLGELMAAASLLVGTLKFDGLLILQARSEGPIPLLMIECSSEREIRGLARYHAEQIPADATLGDLMPNGVLALTVDPIAGQRYQGIVDLDGETLSDCFTNYFVMSQQVGTRFKLCADGRRARGLLLQQLPADRLKDEEERAASWQHITALGNTLTADELLSLDNETVLHRLYHEEQVRLFDVQKLRFHCSCSRERSGNALVSLGLEDAQALVAEQGGQVEIDCQFCNQRYLFDAADIAQLFAGAGVETPSDTRH.

2 cysteine pairs are disulfide-bonded: C235-C237 and C269-C272.

The protein belongs to the HSP33 family. Post-translationally, under oxidizing conditions two disulfide bonds are formed involving the reactive cysteines. Under reducing conditions zinc is bound to the reactive cysteines and the protein is inactive.

It is found in the cytoplasm. Its function is as follows. Redox regulated molecular chaperone. Protects both thermally unfolding and oxidatively damaged proteins from irreversible aggregation. Plays an important role in the bacterial defense system toward oxidative stress. The protein is 33 kDa chaperonin of Pseudomonas fluorescens (strain Pf0-1).